The chain runs to 283 residues: Polyamine aminopropyltransferase (283 aa).

One can recognise a PABS domain in the interval 5-238 (TTWIDEYQKG…GIWSWTFASK (234 aa)). An S-methyl-5'-thioadenosine-binding site is contributed by Gln32. The spermidine site is built by His63 and Asp87. Residues Glu107 and 139 to 140 (DG) each bind S-methyl-5'-thioadenosine. The active-site Proton acceptor is Asp158. 158-161 (DCSD) lines the spermidine pocket.

Belongs to the spermidine/spermine synthase family. In terms of assembly, homodimer or homotetramer.

Its subcellular location is the cytoplasm. It catalyses the reaction S-adenosyl 3-(methylsulfanyl)propylamine + putrescine = S-methyl-5'-thioadenosine + spermidine + H(+). It participates in amine and polyamine biosynthesis; spermidine biosynthesis; spermidine from putrescine: step 1/1. In terms of biological role, catalyzes the irreversible transfer of a propylamine group from the amino donor S-adenosylmethioninamine (decarboxy-AdoMet) to putrescine (1,4-diaminobutane) to yield spermidine. This Prochlorococcus marinus (strain MIT 9515) protein is Polyamine aminopropyltransferase.